A 476-amino-acid polypeptide reads, in one-letter code: Aspartyl/glutamyl-tRNA(Asn/Gln) amidotransferase subunit B (476 aa).

This sequence belongs to the GatB/GatE family. GatB subfamily. Heterotrimer of A, B and C subunits.

It catalyses the reaction L-glutamyl-tRNA(Gln) + L-glutamine + ATP + H2O = L-glutaminyl-tRNA(Gln) + L-glutamate + ADP + phosphate + H(+). It carries out the reaction L-aspartyl-tRNA(Asn) + L-glutamine + ATP + H2O = L-asparaginyl-tRNA(Asn) + L-glutamate + ADP + phosphate + 2 H(+). Functionally, allows the formation of correctly charged Asn-tRNA(Asn) or Gln-tRNA(Gln) through the transamidation of misacylated Asp-tRNA(Asn) or Glu-tRNA(Gln) in organisms which lack either or both of asparaginyl-tRNA or glutaminyl-tRNA synthetases. The reaction takes place in the presence of glutamine and ATP through an activated phospho-Asp-tRNA(Asn) or phospho-Glu-tRNA(Gln). The protein is Aspartyl/glutamyl-tRNA(Asn/Gln) amidotransferase subunit B of Oceanobacillus iheyensis (strain DSM 14371 / CIP 107618 / JCM 11309 / KCTC 3954 / HTE831).